The chain runs to 102 residues: Putative pterin-4-alpha-carbinolamine dehydratase (102 aa).

The protein belongs to the pterin-4-alpha-carbinolamine dehydratase family.

The enzyme catalyses (4aS,6R)-4a-hydroxy-L-erythro-5,6,7,8-tetrahydrobiopterin = (6R)-L-erythro-6,7-dihydrobiopterin + H2O. This is Putative pterin-4-alpha-carbinolamine dehydratase from Burkholderia multivorans (strain ATCC 17616 / 249).